The chain runs to 114 residues: Flagellar hook-basal body complex protein FliE (114 aa).

Belongs to the FliE family.

The protein localises to the bacterial flagellum basal body. This is Flagellar hook-basal body complex protein FliE from Desulfitobacterium hafniense (strain Y51).